A 209-amino-acid chain; its full sequence is Holliday junction branch migration complex subunit RuvA (209 aa).

The domain I stretch occupies residues 1–64; the sequence is MIGKLKGLVD…EDSIKLYGFA (64 aa). Residues 65 to 143 are domain II; it reads SETEREWFRL…ALGASLHTLA (79 aa). The segment at 144-154 is flexible linker; that stretch reads GAGSEGAGVEA. A domain III region spans residues 155-209; that stretch reads PASGAVSDAISVLVNLGFGRSQAAVAVAASSKALGSGAGAGDLAKRALQELAQSG.

The protein belongs to the RuvA family. As to quaternary structure, homotetramer. Forms an RuvA(8)-RuvB(12)-Holliday junction (HJ) complex. HJ DNA is sandwiched between 2 RuvA tetramers; dsDNA enters through RuvA and exits via RuvB. An RuvB hexamer assembles on each DNA strand where it exits the tetramer. Each RuvB hexamer is contacted by two RuvA subunits (via domain III) on 2 adjacent RuvB subunits; this complex drives branch migration. In the full resolvosome a probable DNA-RuvA(4)-RuvB(12)-RuvC(2) complex forms which resolves the HJ.

The protein resides in the cytoplasm. Its function is as follows. The RuvA-RuvB-RuvC complex processes Holliday junction (HJ) DNA during genetic recombination and DNA repair, while the RuvA-RuvB complex plays an important role in the rescue of blocked DNA replication forks via replication fork reversal (RFR). RuvA specifically binds to HJ cruciform DNA, conferring on it an open structure. The RuvB hexamer acts as an ATP-dependent pump, pulling dsDNA into and through the RuvAB complex. HJ branch migration allows RuvC to scan DNA until it finds its consensus sequence, where it cleaves and resolves the cruciform DNA. This is Holliday junction branch migration complex subunit RuvA from Methylocella silvestris (strain DSM 15510 / CIP 108128 / LMG 27833 / NCIMB 13906 / BL2).